The following is a 545-amino-acid chain: Delta 8-(E)-sphingolipid desaturase (545 aa).

One can recognise a Cytochrome b5 heme-binding domain in the interval 1–82 (MASHTKDALL…MLAFQIGRIQ (82 aa)). Heme is bound by residues histidine 42 and histidine 65. The segment at 97–124 (FRHYDENADSEEDDTSGQSQPPSPIFDA) is disordered. A helical membrane pass occupies residues 227–247 (LGWYSVSAVFLGCFWHQLVFS). The Histidine box-1 signature appears at 249 to 253 (HDAGH). A helical transmembrane segment spans residues 262–282 (VDSIIGILIADFLGGLSLGWW). A Histidine box-2 motif is present at residues 286-290 (HNVHH). 2 helical membrane passes run 382–402 (IAGQ…CSIP) and 408–428 (LSFL…ITLS). The Histidine box-3 motif lies at 470–474 (QAIHH).

It belongs to the fatty acid desaturase type 1 family.

Its subcellular location is the membrane. It carries out the reaction an N-acylsphing-4-enine + 2 Fe(II)-[cytochrome b5] + O2 + 2 H(+) = a (4E,8E)-4-sphinga-4,8-dienine ceramide + 2 Fe(III)-[cytochrome b5] + 2 H2O. It functions in the pathway lipid metabolism; sphingolipid metabolism. Delta(8)-fatty-acid desaturase which introduces a double bond at the 8-position in the long-chain base (LCB) of ceramides. Required for the formation of the di-unsaturated sphingoid base (E,E)-sphinga-4,8-dienine during glucosylceramide (GluCer) biosynthesis. Plays an important role in conidiation. The protein is Delta 8-(E)-sphingolipid desaturase of Emericella nidulans (strain FGSC A4 / ATCC 38163 / CBS 112.46 / NRRL 194 / M139) (Aspergillus nidulans).